Reading from the N-terminus, the 185-residue chain is Putative 3-methyladenine DNA glycosylase (185 aa).

Belongs to the DNA glycosylase MPG family.

This Rhizobium meliloti (strain 1021) (Ensifer meliloti) protein is Putative 3-methyladenine DNA glycosylase.